Reading from the N-terminus, the 318-residue chain is Ferrochelatase (318 aa).

Fe cation contacts are provided by His-186 and Glu-264.

This sequence belongs to the ferrochelatase family.

It is found in the cytoplasm. The catalysed reaction is heme b + 2 H(+) = protoporphyrin IX + Fe(2+). The protein operates within porphyrin-containing compound metabolism; protoheme biosynthesis; protoheme from protoporphyrin-IX: step 1/1. In terms of biological role, catalyzes the ferrous insertion into protoporphyrin IX. The polypeptide is Ferrochelatase (Chlamydia felis (strain Fe/C-56) (Chlamydophila felis)).